We begin with the raw amino-acid sequence, 128 residues long: uncharacterized protein (128 aa).

2 helical membrane-spanning segments follow: residues 33-53 (LLYI…VCYV) and 61-81 (FFCW…VIIY). Positions 99–120 (DSLNQNVGESQSNEPPKYTSTF) are enriched in polar residues. Residues 99 to 128 (DSLNQNVGESQSNEPPKYTSTFMDELDKQD) are disordered.

Its subcellular location is the membrane. This is an uncharacterized protein from Schizosaccharomyces pombe (strain 972 / ATCC 24843) (Fission yeast).